The sequence spans 600 residues: Copine-A (600 aa).

2 C2 domains span residues 1 to 111 (MNLK…TVCL) and 116 to 246 (KSGK…NVIN). Residues Asp23, Asp29, Asp82, Asp84, Asp89, Asp151, Asp158, Asp215, Asp217, and Asp223 each coordinate Ca(2+). The 218-residue stretch at 286 to 503 (NLIVGIDCTA…ELAAEVLREI (218 aa)) folds into the VWFA domain. Over residues 535-549 (YDNPTTTTTATSPST) the composition is skewed to low complexity. A disordered region spans residues 535-583 (YDNPTTTTTATSPSTGIDLNKGSNVGLNLTKTESSPSPSGGAGIDLNKG). A compositionally biased stretch (polar residues) spans 555 to 572 (KGSNVGLNLTKTESSPSP).

Belongs to the copine family. Ca(2+) serves as cofactor.

It is found in the cytoplasm. Its subcellular location is the membrane. Required for cytokinesis, contractile vacuole function and development. The sequence is that of Copine-A (cpnA) from Dictyostelium discoideum (Social amoeba).